An 89-amino-acid chain; its full sequence is Dynein light chain 2, cytoplasmic (89 aa).

Belongs to the dynein light chain family.

The protein resides in the cytoplasm. Its subcellular location is the cytoskeleton. Functionally, acts as a non-catalytic accessory component of a dynein complex. In Drosophila melanogaster (Fruit fly), this protein is Dynein light chain 2, cytoplasmic (Cdlc2).